Reading from the N-terminus, the 918-residue chain is GPI ethanolamine phosphate transferase 3 (918 aa).

The chain crosses the membrane as a helical span at residues isoleucine 16–phenylalanine 36. Asparagine 54, asparagine 71, asparagine 101, asparagine 197, and asparagine 399 each carry an N-linked (GlcNAc...) asparagine glycan. Transmembrane regions (helical) follow at residues leucine 429–leucine 449, methionine 459–leucine 479, serine 486–phenylalanine 506, phenylalanine 523–tryptophan 543, leucine 547–cysteine 563, methionine 567–isoleucine 587, threonine 616–leucine 636, leucine 651–phenylalanine 671, serine 687–leucine 707, isoleucine 715–leucine 735, proline 738–lysine 758, proline 762–phenylalanine 782, isoleucine 813–phenylalanine 833, phenylalanine 853–phenylalanine 873, and phenylalanine 887–glycine 907.

It belongs to the PIGG/PIGN/PIGO family. PIGO subfamily. Glycosylated.

The protein resides in the endoplasmic reticulum membrane. Its pathway is glycolipid biosynthesis; glycosylphosphatidylinositol-anchor biosynthesis. In terms of biological role, involved in glycosylphosphatidylinositol-anchor biosynthesis. Transfers ethanolamine phosphate to the GPI third mannose which links the GPI-anchor to the C-terminus of the proteins by an amide bond. Involved in cell wall biosynthesis. This chain is GPI ethanolamine phosphate transferase 3 (gpi13), found in Schizosaccharomyces pombe (strain 972 / ATCC 24843) (Fission yeast).